Consider the following 168-residue polypeptide: uncharacterized protein (168 aa).

The next 2 membrane-spanning stretches (helical) occupy residues 27–47 and 147–167; these read NWLV…RISG and IENG…QVMF.

Its subcellular location is the membrane. This is an uncharacterized protein from Saccharomyces cerevisiae (strain ATCC 204508 / S288c) (Baker's yeast).